The following is a 571-amino-acid chain: Proline--tRNA ligase (571 aa).

This sequence belongs to the class-II aminoacyl-tRNA synthetase family. ProS type 1 subfamily. Homodimer.

It is found in the cytoplasm. The enzyme catalyses tRNA(Pro) + L-proline + ATP = L-prolyl-tRNA(Pro) + AMP + diphosphate. Functionally, catalyzes the attachment of proline to tRNA(Pro) in a two-step reaction: proline is first activated by ATP to form Pro-AMP and then transferred to the acceptor end of tRNA(Pro). As ProRS can inadvertently accommodate and process non-cognate amino acids such as alanine and cysteine, to avoid such errors it has two additional distinct editing activities against alanine. One activity is designated as 'pretransfer' editing and involves the tRNA(Pro)-independent hydrolysis of activated Ala-AMP. The other activity is designated 'posttransfer' editing and involves deacylation of mischarged Ala-tRNA(Pro). The misacylated Cys-tRNA(Pro) is not edited by ProRS. This is Proline--tRNA ligase from Ligilactobacillus salivarius (strain UCC118) (Lactobacillus salivarius).